The sequence spans 459 residues: tRNA(Ile)-lysidine synthase (459 aa).

Ser38–Ser43 contacts ATP.

The protein belongs to the tRNA(Ile)-lysidine synthase family.

The protein resides in the cytoplasm. It carries out the reaction cytidine(34) in tRNA(Ile2) + L-lysine + ATP = lysidine(34) in tRNA(Ile2) + AMP + diphosphate + H(+). In terms of biological role, ligates lysine onto the cytidine present at position 34 of the AUA codon-specific tRNA(Ile) that contains the anticodon CAU, in an ATP-dependent manner. Cytidine is converted to lysidine, thus changing the amino acid specificity of the tRNA from methionine to isoleucine. The protein is tRNA(Ile)-lysidine synthase of Acinetobacter baylyi (strain ATCC 33305 / BD413 / ADP1).